The primary structure comprises 171 residues: Squamosa promoter-binding protein 2 (171 aa).

Disordered stretches follow at residues 20–46 and 57–76; these read GDEG…VVKV and KLNL…TASG. Residues 22–40 show a composition bias toward acidic residues; sequence EGSDFEEEEEGEDEEEEEQ. The SBP-type zinc-finger motif lies at 82-159; it reads QPCCLVENCG…AGHNERRRKS (78 aa). Residues Cys-85, Cys-90, Cys-107, His-110, Cys-126, Cys-129, His-133, and Cys-145 each contribute to the Zn(2+) site. Positions 142–158 match the Bipartite nuclear localization signal motif; sequence KRSCRRRLAGHNERRRK. Residues 149–158 show a composition bias toward basic residues; it reads LAGHNERRRK. Residues 149–171 are disordered; it reads LAGHNERRRKSSLESHKEGRSPR. Residues 159–171 are compositionally biased toward basic and acidic residues; sequence SSLESHKEGRSPR.

The protein resides in the nucleus. In terms of biological role, probable transcriptional factor. Binds to the promoter of the SQUAMOSA gene. The protein is Squamosa promoter-binding protein 2 (SBP2) of Antirrhinum majus (Garden snapdragon).